Consider the following 410-residue polypeptide: UDP-N-acetylglucosamine--N-acetylmuramyl-(pentapeptide) pyrophosphoryl-undecaprenol N-acetylglucosamine transferase (410 aa).

The interval 1-35 (MKDTVSQPAGGRGATAPRPADAASPSCGSSPSADS) is disordered. Low complexity predominate over residues 14–35 (ATAPRPADAASPSCGSSPSADS). UDP-N-acetyl-alpha-D-glucosamine is bound by residues 45 to 47 (TAG), N167, R204, S238, and Q334.

It belongs to the glycosyltransferase 28 family. MurG subfamily.

The protein localises to the cell membrane. It carries out the reaction di-trans,octa-cis-undecaprenyl diphospho-N-acetyl-alpha-D-muramoyl-L-alanyl-D-glutamyl-meso-2,6-diaminopimeloyl-D-alanyl-D-alanine + UDP-N-acetyl-alpha-D-glucosamine = di-trans,octa-cis-undecaprenyl diphospho-[N-acetyl-alpha-D-glucosaminyl-(1-&gt;4)]-N-acetyl-alpha-D-muramoyl-L-alanyl-D-glutamyl-meso-2,6-diaminopimeloyl-D-alanyl-D-alanine + UDP + H(+). Its pathway is cell wall biogenesis; peptidoglycan biosynthesis. Cell wall formation. Catalyzes the transfer of a GlcNAc subunit on undecaprenyl-pyrophosphoryl-MurNAc-pentapeptide (lipid intermediate I) to form undecaprenyl-pyrophosphoryl-MurNAc-(pentapeptide)GlcNAc (lipid intermediate II). In Mycobacterium tuberculosis (strain ATCC 25177 / H37Ra), this protein is UDP-N-acetylglucosamine--N-acetylmuramyl-(pentapeptide) pyrophosphoryl-undecaprenol N-acetylglucosamine transferase.